Consider the following 395-residue polypeptide: Cytoplasmic 60S subunit biogenesis factor REI1 homolog 2 (395 aa).

C2H2-type zinc fingers lie at residues 4-28 (LACN…SEWH), 68-92 (YSCG…SKSH), 171-194 (ACCL…HKFH), and 222-249 (FVCL…AKGH).

This sequence belongs to the REI1 family. Can form homodimer. Interacts with RLP24, RLP24A, RPL24B, EBP1 and JJJ1.

It is found in the cytoplasm. In terms of biological role, pre-60S-associated factor involved in the cytoplasmic maturation of the 60S subunit. Involved in the dissociation and recycling of other late pre-60S factors before newly synthesized large ribosomal subunits enter translation. Can complement the growth defect of a yeast mutant lacking REI1. Required for leaf growth under cold temperature conditions. This is Cytoplasmic 60S subunit biogenesis factor REI1 homolog 2 from Arabidopsis thaliana (Mouse-ear cress).